The primary structure comprises 148 residues: Urease accessory protein UreE (148 aa).

Belongs to the UreE family.

Its subcellular location is the cytoplasm. Its function is as follows. Involved in urease metallocenter assembly. Binds nickel. Probably functions as a nickel donor during metallocenter assembly. The sequence is that of Urease accessory protein UreE from Lysinibacillus sphaericus (strain C3-41).